Reading from the N-terminus, the 152-residue chain is Small ribosomal subunit protein bS6 (152 aa).

The segment at 96–152 is disordered; sequence HEEGPSAMLQKRDRDDRGPREGGDRGPRREFGDRPPRRDGDFQRGPRPDRAPREDRA.

It belongs to the bacterial ribosomal protein bS6 family.

Binds together with bS18 to 16S ribosomal RNA. The sequence is that of Small ribosomal subunit protein bS6 from Rhizobium etli (strain CIAT 652).